The primary structure comprises 719 residues: MAFATEHPVVAHSEYRAVEEIVRAGGHFEVVSPHAPAGDQPAAIDELERRINAGERDVVLLGATGTGKSATTAWLIERLQRPTLVMAPNKTLAAQLANELREMLPHNAVEYFVSYYDYYQPEAYIAQTDTYIEKDSSINDDVERLRHSATSALLSRRDVVVVASVSCIYGLGTPQSYLDRSVELKVGEEVPRDGLLRLLVDVQYTRNDMSFTRGSFRVRGDTVEIIPSYEELAVRIEFFGDEIEALYYLHPLTGEVIRQVDSLRIFPATHYVAGPERMAHAVSAIEEELAERLAELESQGKLLEAQRLRMRTNYDIEMMRQVGFCSGIENYSRHIDGRGPGTPPATLLDYFPEDFLLVIDESHVTVPQIGGMYEGDISRKRNLVEYGFRLPSACDNRPLTWEEFADRIGQTVYLSATPGPYELSQTGGEFVEQVIRPTGLVDPKVVVKPTKGQIDDLIGEIRTRADADQRVLVTTLTKKMAEDLTDYLLEMGIRVRYLHSEVDTLRRVELLRQLRLGDYDVLVGINLLREGLDLPEVSLVAILDADKEGFLRSSRSLIQTIGRAARNVSGEVHMYADKITDSMREAIDETERRRAKQIAYNEANGIDPQPLRKKIADILDQVYREADDTAVVEVGGSGRNASRGRRAQGEPGRAVSAGVFEGRDTSAMPRAELADLIKDLTAQMMAAARDLQFELAARFRDEIADLKRELRGMDAAGLK.

One can recognise a Helicase ATP-binding domain in the interval 49 to 435; the sequence is RRINAGERDV…TGGEFVEQVI (387 aa). Residue 62–69 participates in ATP binding; it reads GATGTGKS. A Beta-hairpin motif is present at residues 115–138; it reads YYDYYQPEAYIAQTDTYIEKDSSI. Positions 453-606 constitute a Helicase C-terminal domain; sequence QIDDLIGEIR…QIAYNEANGI (154 aa). The segment at 635 to 654 is disordered; the sequence is GGSGRNASRGRRAQGEPGRA. Positions 674–709 constitute a UVR domain; that stretch reads ADLIKDLTAQMMAAARDLQFELAARFRDEIADLKRE.

The protein belongs to the UvrB family. In terms of assembly, forms a heterotetramer with UvrA during the search for lesions. Interacts with UvrC in an incision complex.

It localises to the cytoplasm. In terms of biological role, the UvrABC repair system catalyzes the recognition and processing of DNA lesions. A damage recognition complex composed of 2 UvrA and 2 UvrB subunits scans DNA for abnormalities. Upon binding of the UvrA(2)B(2) complex to a putative damaged site, the DNA wraps around one UvrB monomer. DNA wrap is dependent on ATP binding by UvrB and probably causes local melting of the DNA helix, facilitating insertion of UvrB beta-hairpin between the DNA strands. Then UvrB probes one DNA strand for the presence of a lesion. If a lesion is found the UvrA subunits dissociate and the UvrB-DNA preincision complex is formed. This complex is subsequently bound by UvrC and the second UvrB is released. If no lesion is found, the DNA wraps around the other UvrB subunit that will check the other stand for damage. In Mycobacterium tuberculosis (strain CDC 1551 / Oshkosh), this protein is UvrABC system protein B.